A 794-amino-acid chain; its full sequence is Histone-lysine N-methyltransferase, H3 lysine-9 specific SUVH5 (794 aa).

Disordered regions lie at residues 187–210 (VGRD…KRSI) and 254–276 (SPVK…KNSE). Residues 194 to 203 (NMGSKFSKNG) are compositionally biased toward polar residues. Basic and acidic residues predominate over residues 258-276 (PSEKRNGDYGEGSMRKNSE). A YDG domain is found at 365–515 (GTVPGVEVGD…KLVFKFKLRR (151 aa)). One can recognise a Pre-SET domain in the interval 585–644 (KSCGCTNGCSKSKNCACIVKNGGKIPYYDGAIVEIKPLVYECGPHCKCPPSCNMRVSQHG). Residues 647–764 (IKLEIFKTES…PLQELSYDYN (118 aa)) enclose the SET domain. A Post-SET domain is found at 778-794 (KKKFCYCGSAECSGRLY).

The protein belongs to the class V-like SAM-binding methyltransferase superfamily. Histone-lysine methyltransferase family. Suvar3-9 subfamily. As to expression, expressed in leaves stems and flowers.

The protein localises to the nucleus. The protein resides in the chromosome. It is found in the centromere. The catalysed reaction is N(6)-methyl-L-lysyl(9)-[histone H3] + S-adenosyl-L-methionine = N(6),N(6)-dimethyl-L-lysyl(9)-[histone H3] + S-adenosyl-L-homocysteine + H(+). The enzyme catalyses L-lysyl(9)-[histone H3] + S-adenosyl-L-methionine = N(6)-methyl-L-lysyl(9)-[histone H3] + S-adenosyl-L-homocysteine + H(+). Histone methyltransferase. Methylates 'Lys-9' of histone H3. H3 'Lys-9' methylation represents a specific tag for epigenetic transcriptional repression. This Arabidopsis thaliana (Mouse-ear cress) protein is Histone-lysine N-methyltransferase, H3 lysine-9 specific SUVH5 (SUVH5).